A 490-amino-acid polypeptide reads, in one-letter code: Betaine aldehyde dehydrogenase (490 aa).

Positions 27 and 93 each coordinate K(+). Gly-150–Trp-152 is an NAD(+) binding site. The active-site Charge relay system is the Lys-162. Lys-176–Glu-179 contributes to the NAD(+) binding site. Val-180 is a K(+) binding site. Position 230–233 (Gly-230–Thr-233) interacts with NAD(+). Leu-246 serves as a coordination point for K(+). The active-site Proton acceptor is Glu-252. 3 residues coordinate NAD(+): Gly-254, Cys-286, and Glu-387. The active-site Nucleophile is the Cys-286. Cysteine sulfenic acid (-SOH) is present on Cys-286. K(+) is bound by residues Lys-457 and Gly-460. The active-site Charge relay system is Glu-464.

The protein belongs to the aldehyde dehydrogenase family. As to quaternary structure, dimer of dimers. K(+) is required as a cofactor.

It catalyses the reaction betaine aldehyde + NAD(+) + H2O = glycine betaine + NADH + 2 H(+). It participates in amine and polyamine biosynthesis; betaine biosynthesis via choline pathway; betaine from betaine aldehyde: step 1/1. Its function is as follows. Involved in the biosynthesis of the osmoprotectant glycine betaine. Catalyzes the irreversible oxidation of betaine aldehyde to the corresponding acid. This chain is Betaine aldehyde dehydrogenase, found in Pseudomonas fluorescens (strain ATCC BAA-477 / NRRL B-23932 / Pf-5).